Consider the following 277-residue polypeptide: Bis(5'-nucleosyl)-tetraphosphatase, symmetrical (277 aa).

Belongs to the Ap4A hydrolase family.

It carries out the reaction P(1),P(4)-bis(5'-adenosyl) tetraphosphate + H2O = 2 ADP + 2 H(+). In terms of biological role, hydrolyzes diadenosine 5',5'''-P1,P4-tetraphosphate to yield ADP. The protein is Bis(5'-nucleosyl)-tetraphosphatase, symmetrical of Methylobacillus flagellatus (strain ATCC 51484 / DSM 6875 / VKM B-1610 / KT).